We begin with the raw amino-acid sequence, 317 residues long: Melanocyte-stimulating hormone receptor (317 aa).

Over 1–37 the chain is Extracellular; that stretch reads MPAQGSQRSXLGSLNSTLMATPSLGLAANQSGPQCLE. N-linked (GlcNAc...) asparagine glycans are attached at residues asparagine 15 and asparagine 29. Residues 38–63 traverse the membrane as a helical segment; that stretch reads VSVPDGLFLCLGLVSLVENMLVVAAI. Residues 64–72 lie on the Cytoplasmic side of the membrane; it reads AKNRNLHSP. Residues 73–93 traverse the membrane as a helical segment; the sequence is MYCFICCLALSDLLVSISNVL. The Extracellular segment spans residues 94–118; sequence ETAVMLLLEAGALAVGATVVQQLDN. The helical transmembrane segment at 119–140 threads the bilayer; sequence VIDVLICSSMVSSLCFLGAIAM. Residues 141-163 lie on the Cytoplasmic side of the membrane; it reads DRYISIFYALRYHSIVTLSRAQW. The helical transmembrane segment at 164 to 183 threads the bilayer; it reads ATAAVWAASILSSTLFIAYY. Residues 184–191 lie on the Extracellular side of the membrane; that stretch reads DRTVVLLC. A helical transmembrane segment spans residues 192–211; sequence LVVFFLAMLVLMAVLYAHML. The Cytoplasmic segment spans residues 212 to 240; the sequence is TQACQHVQGITRLHKRQHLVQQGFGLKGA. A helical membrane pass occupies residues 241-266; it reads ATLTILLGVFLLCWGPFFLHLTLIAV. Residues 267 to 279 lie on the Extracellular side of the membrane; the sequence is CPQHPTCSCVFKN. A helical transmembrane segment spans residues 280–300; the sequence is FKLFLALIICNAIVDPLIYAF. The Cytoplasmic segment spans residues 301 to 317; that stretch reads RSQELRKTLKEVLLFSW.

It belongs to the G-protein coupled receptor 1 family. As to quaternary structure, interacts with MGRN1, but does not undergo MGRN1-mediated ubiquitination; this interaction competes with GNAS-binding and thus inhibits agonist-induced cAMP production. Interacts with OPN3; the interaction results in a decrease in MC1R-mediated cAMP signaling and ultimately a decrease in melanin production in melanocytes.

It localises to the cell membrane. Receptor for MSH (alpha, beta and gamma) and ACTH. The activity of this receptor is mediated by G proteins which activate adenylate cyclase. Mediates melanogenesis, the production of eumelanin (black/brown) and phaeomelanin (red/yellow), via regulation of cAMP signaling in melanocytes. The sequence is that of Melanocyte-stimulating hormone receptor (MC1R) from Galago senegalensis (Northern lesser bushbaby).